We begin with the raw amino-acid sequence, 240 residues long: Uridylate kinase (240 aa).

13-16 (KASG) lines the ATP pocket. Position 55 (G55) interacts with UMP. Residues G56 and R60 each contribute to the ATP site. Residues D75 and 136 to 143 (TGNPFFTT) each bind UMP. Residues T163, Q164, Y169, and D172 each contribute to the ATP site.

The protein belongs to the UMP kinase family. As to quaternary structure, homohexamer.

The protein resides in the cytoplasm. It carries out the reaction UMP + ATP = UDP + ADP. It functions in the pathway pyrimidine metabolism; CTP biosynthesis via de novo pathway; UDP from UMP (UMPK route): step 1/1. Inhibited by UTP. Functionally, catalyzes the reversible phosphorylation of UMP to UDP. This chain is Uridylate kinase, found in Mesorhizobium japonicum (strain LMG 29417 / CECT 9101 / MAFF 303099) (Mesorhizobium loti (strain MAFF 303099)).